A 917-amino-acid polypeptide reads, in one-letter code: Spermatogenesis-associated protein 31D3 (917 aa).

Residues 29–49 (FICLSGLGLFILYLFYMVLTL) traverse the membrane as a helical segment. Disordered regions lie at residues 55-80 (EKNNDTQKHQGRARRKRKSVTFKDRK), 152-195 (SVSP…PPPL), and 773-797 (SQETAPKNHLLHDPETSSEEDLRSN). The segment covering 63–74 (HQGRARRKRKSV) has biased composition (basic residues). The segment covering 152–163 (SVSPLASSASGA) has biased composition (low complexity). The span at 164-177 (ESSFTLASTPSATT) shows a compositional bias: polar residues. Basic and acidic residues predominate over residues 782–797 (LLHDPETSSEEDLRSN).

The protein belongs to the SPATA31 family.

The protein resides in the membrane. In terms of biological role, may play a role in spermatogenesis. In Homo sapiens (Human), this protein is Spermatogenesis-associated protein 31D3 (SPATA31D3).